The sequence spans 652 residues: DNA ligase (652 aa).

NAD(+) is bound by residues 30–34, 79–80, and glutamate 108; these read DEVYD and SL. Lysine 110 functions as the N6-AMP-lysine intermediate in the catalytic mechanism. Residues arginine 131, glutamate 165, lysine 280, and lysine 304 each contribute to the NAD(+) site. The Zn(2+) site is built by cysteine 398, cysteine 401, cysteine 414, and cysteine 419. Positions 574 to 652 constitute a BRCT domain; that stretch reads AKENPFKGKS…DEMRSKIEQA (79 aa).

It belongs to the NAD-dependent DNA ligase family. LigA subfamily. The cofactor is Mg(2+). Mn(2+) serves as cofactor.

The enzyme catalyses NAD(+) + (deoxyribonucleotide)n-3'-hydroxyl + 5'-phospho-(deoxyribonucleotide)m = (deoxyribonucleotide)n+m + AMP + beta-nicotinamide D-nucleotide.. In terms of biological role, DNA ligase that catalyzes the formation of phosphodiester linkages between 5'-phosphoryl and 3'-hydroxyl groups in double-stranded DNA using NAD as a coenzyme and as the energy source for the reaction. It is essential for DNA replication and repair of damaged DNA. The sequence is that of DNA ligase from Sulfurimonas denitrificans (strain ATCC 33889 / DSM 1251) (Thiomicrospira denitrificans (strain ATCC 33889 / DSM 1251)).